We begin with the raw amino-acid sequence, 288 residues long: MGEFSTLLQQGNGWFFIPSAILLGILHGLEPGHSKTMMAAFIIAIKGTVKQAVMLGLAATLSHTAIVWLIALGGMYLSRAFTAQSVEPWLQLISAIIILSTACWMFWRTWRGEQQWLAGNHHHDHDHDHDHDHDHDHDHDHDHDHDHDHHGHIHPEGATSKAYQDAHERAHAADIQRRFDGQTVTNGQILLFGLTGGLIPCPAAITVLLICIQLKAFTLGATMVLSFSLGLALTLVTVGVGAAISVQQAAKRWSGFSTLARRAPYFSSILIGLVGVYMGIHGYTGIMQ.

At 1-12 the chain is on the periplasmic side; the sequence is MGEFSTLLQQGN. A helical transmembrane segment spans residues 13–33; sequence GWFFIPSAILLGILHGLEPGH. At 34 to 51 the chain is on the cytoplasmic side; sequence SKTMMAAFIIAIKGTVKQ. A helical transmembrane segment spans residues 52–72; sequence AVMLGLAATLSHTAIVWLIAL. Residues 73 to 85 are Periplasmic-facing; that stretch reads GGMYLSRAFTAQS. A helical membrane pass occupies residues 86–106; that stretch reads VEPWLQLISAIIILSTACWMF. Topologically, residues 107–188 are cytoplasmic; that stretch reads WRTWRGEQQW…FDGQTVTNGQ (82 aa). Basic and acidic residues predominate over residues 122 to 155; it reads HHDHDHDHDHDHDHDHDHDHDHDHDHDHHGHIHP. The segment at 122 to 166 is disordered; that stretch reads HHDHDHDHDHDHDHDHDHDHDHDHDHDHHGHIHPEGATSKAYQDA. Residues 189 to 209 form a helical membrane-spanning segment; it reads ILLFGLTGGLIPCPAAITVLL. Over 210–223 the chain is Periplasmic; sequence ICIQLKAFTLGATM. The helical transmembrane segment at 224–244 threads the bilayer; sequence VLSFSLGLALTLVTVGVGAAI. Over 245 to 265 the chain is Cytoplasmic; sequence SVQQAAKRWSGFSTLARRAPY. Residues 266 to 286 traverse the membrane as a helical segment; it reads FSSILIGLVGVYMGIHGYTGI. The Periplasmic segment spans residues 287-288; that stretch reads MQ.

It belongs to the NiCoT transporter (TC 2.A.52) family. RcnA subfamily.

Its subcellular location is the cell inner membrane. In terms of biological role, efflux system for nickel and cobalt. The chain is Nickel/cobalt efflux system RcnA (rcnA) from Salmonella typhimurium (strain LT2 / SGSC1412 / ATCC 700720).